A 264-amino-acid polypeptide reads, in one-letter code: Thymidylate synthase (264 aa).

DUMP is bound at residue arginine 21. Position 51 (histidine 51) interacts with (6R)-5,10-methylene-5,6,7,8-tetrahydrofolate. 126-127 (RR) contacts dUMP. Cysteine 146 serves as the catalytic Nucleophile. DUMP-binding positions include 166–169 (RSVD), asparagine 177, and 207–209 (HLY). Residue aspartate 169 coordinates (6R)-5,10-methylene-5,6,7,8-tetrahydrofolate. Alanine 263 provides a ligand contact to (6R)-5,10-methylene-5,6,7,8-tetrahydrofolate.

This sequence belongs to the thymidylate synthase family. Bacterial-type ThyA subfamily. Homodimer.

The protein resides in the cytoplasm. The enzyme catalyses dUMP + (6R)-5,10-methylene-5,6,7,8-tetrahydrofolate = 7,8-dihydrofolate + dTMP. It participates in pyrimidine metabolism; dTTP biosynthesis. Its function is as follows. Catalyzes the reductive methylation of 2'-deoxyuridine-5'-monophosphate (dUMP) to 2'-deoxythymidine-5'-monophosphate (dTMP) while utilizing 5,10-methylenetetrahydrofolate (mTHF) as the methyl donor and reductant in the reaction, yielding dihydrofolate (DHF) as a by-product. This enzymatic reaction provides an intracellular de novo source of dTMP, an essential precursor for DNA biosynthesis. This is Thymidylate synthase from Geobacillus kaustophilus (strain HTA426).